The sequence spans 481 residues: Aspartyl/glutamyl-tRNA(Asn/Gln) amidotransferase subunit B (481 aa).

Belongs to the GatB/GatE family. GatB subfamily. In terms of assembly, heterotrimer of A, B and C subunits.

The catalysed reaction is L-glutamyl-tRNA(Gln) + L-glutamine + ATP + H2O = L-glutaminyl-tRNA(Gln) + L-glutamate + ADP + phosphate + H(+). It catalyses the reaction L-aspartyl-tRNA(Asn) + L-glutamine + ATP + H2O = L-asparaginyl-tRNA(Asn) + L-glutamate + ADP + phosphate + 2 H(+). In terms of biological role, allows the formation of correctly charged Asn-tRNA(Asn) or Gln-tRNA(Gln) through the transamidation of misacylated Asp-tRNA(Asn) or Glu-tRNA(Gln) in organisms which lack either or both of asparaginyl-tRNA or glutaminyl-tRNA synthetases. The reaction takes place in the presence of glutamine and ATP through an activated phospho-Asp-tRNA(Asn) or phospho-Glu-tRNA(Gln). In Teredinibacter turnerae (strain ATCC 39867 / T7901), this protein is Aspartyl/glutamyl-tRNA(Asn/Gln) amidotransferase subunit B.